Reading from the N-terminus, the 301-residue chain is Protoheme IX farnesyltransferase (301 aa).

Helical transmembrane passes span 29–49 (VVAL…PGAV), 51–71 (LQPL…AAAF), 101–121 (AFSF…WWVN), 123–143 (LTAW…TAYL), 150–170 (NIVI…TAVT), 177–197 (ALLL…ALAI), 223–243 (CILL…LVGM), 244–264 (SGPV…YKAW), and 281–301 (FSIY…YLWG).

Belongs to the UbiA prenyltransferase family. Protoheme IX farnesyltransferase subfamily.

It is found in the cell inner membrane. The enzyme catalyses heme b + (2E,6E)-farnesyl diphosphate + H2O = Fe(II)-heme o + diphosphate. Its pathway is porphyrin-containing compound metabolism; heme O biosynthesis; heme O from protoheme: step 1/1. Converts heme B (protoheme IX) to heme O by substitution of the vinyl group on carbon 2 of heme B porphyrin ring with a hydroxyethyl farnesyl side group. In Shewanella denitrificans (strain OS217 / ATCC BAA-1090 / DSM 15013), this protein is Protoheme IX farnesyltransferase.